The primary structure comprises 992 residues: Ankyrin repeat domain-containing protein 18A (992 aa).

ANK repeat units follow at residues 67 to 96 (KDRTVLHLACAHGRVQVVTLLLHRRCQIDI), 100 to 129 (LNRTPLMKAVHSQEEACAIVLLECGANPNI), 133 to 162 (YGNTALHYAVYNKGTSLAERLLSHHANIEA), 166 to 195 (EGNTPLLFAINSRRQHMVEFLLKNQANIHA), and 199 to 228 (FKRTALILAVQHNLSSIVTLLLQQNIRISS). The interval 262-320 (NHLRNDNQETAAMKPANLKKRKERAKAEHNLKVASEEKQERLQRSENKQPQDSQSYGKK) is disordered. Coiled coils occupy residues 278 to 310 (NLKKRKERAKAEHNLKVASEEKQERLQRSENKQ), 378 to 618 (KMIT…AERE), 683 to 713 (ISLLNYTADQIRKKNRELEEEATGYKKCLEM), and 743 to 899 (FKKL…EAFA). The segment covering 286–310 (AKAEHNLKVASEEKQERLQRSENKQ) has biased composition (basic and acidic residues).

The polypeptide is Ankyrin repeat domain-containing protein 18A (ANKRD18A) (Homo sapiens (Human)).